Consider the following 956-residue polypeptide: Zinc finger CCHC domain-containing protein 14 (956 aa).

Disordered stretches follow at residues 25–50 (SSLN…PSGA), 78–99 (ALHT…GKHG), 206–229 (SSSS…KVGA), 243–276 (GIPS…GTGS), 361–464 (KEKS…EKEK), 485–505 (PVQN…PQLM), 543–583 (LEER…QGLS), and 750–786 (FYSG…PQPA). Positions 29 to 43 (SGGGGGGGGGGGGKS) are enriched in gly residues. 2 stretches are compositionally biased toward low complexity: residues 206 to 225 (SSSS…PSLP) and 246 to 265 (SSQS…SASL). The segment covering 369 to 389 (LNSSAPSLVTSSGVARVTPTS) has biased composition (polar residues). The segment covering 423-432 (SSEYSSSSSS) has biased composition (low complexity). A compositionally biased stretch (basic and acidic residues) spans 438–464 (VREESSDSAEESDRRVDIHVEGTEKEK). Positions 750 to 768 (FYSGGAGSSSPGNIPASSQ) are enriched in low complexity. The segment at 913-930 (LSCYNCGATGHRAQDCKQ) adopts a CCHC-type zinc-finger fold.

In Mus musculus (Mouse), this protein is Zinc finger CCHC domain-containing protein 14 (Zcchc14).